The following is a 689-amino-acid chain: Polyribonucleotide nucleotidyltransferase (689 aa).

Mg(2+) contacts are provided by Asp-482 and Asp-488. The KH domain maps to 549 to 608; sequence PRMITLTIPQNKIGELIGPGGKNIRKIQEDNNVKIDIEETGRVFISGVESDGVKSAKEYV. Positions 618 to 686 constitute an S1 motif domain; it reads GKIYKSRVTK…KQGRINLSIK (69 aa).

The protein belongs to the polyribonucleotide nucleotidyltransferase family. The cofactor is Mg(2+).

It localises to the cytoplasm. The enzyme catalyses RNA(n+1) + phosphate = RNA(n) + a ribonucleoside 5'-diphosphate. Functionally, involved in mRNA degradation. Catalyzes the phosphorolysis of single-stranded polyribonucleotides processively in the 3'- to 5'-direction. The polypeptide is Polyribonucleotide nucleotidyltransferase (Endomicrobium trichonymphae).